The primary structure comprises 315 residues: 4-hydroxy-3-methylbut-2-enyl diphosphate reductase (315 aa).

Cys-12 contacts [4Fe-4S] cluster. 2 residues coordinate (2E)-4-hydroxy-3-methylbut-2-enyl diphosphate: His-41 and His-74. Dimethylallyl diphosphate-binding residues include His-41 and His-74. Isopentenyl diphosphate contacts are provided by His-41 and His-74. Position 96 (Cys-96) interacts with [4Fe-4S] cluster. His-124 provides a ligand contact to (2E)-4-hydroxy-3-methylbut-2-enyl diphosphate. His-124 is a binding site for dimethylallyl diphosphate. Residue His-124 participates in isopentenyl diphosphate binding. The Proton donor role is filled by Glu-126. Thr-168 contributes to the (2E)-4-hydroxy-3-methylbut-2-enyl diphosphate binding site. Cys-198 provides a ligand contact to [4Fe-4S] cluster. Positions 226, 227, 228, and 270 each coordinate (2E)-4-hydroxy-3-methylbut-2-enyl diphosphate. Dimethylallyl diphosphate contacts are provided by Ser-226, Ser-227, Asn-228, and Ser-270. Positions 226, 227, 228, and 270 each coordinate isopentenyl diphosphate.

The protein belongs to the IspH family. The cofactor is [4Fe-4S] cluster.

The catalysed reaction is isopentenyl diphosphate + 2 oxidized [2Fe-2S]-[ferredoxin] + H2O = (2E)-4-hydroxy-3-methylbut-2-enyl diphosphate + 2 reduced [2Fe-2S]-[ferredoxin] + 2 H(+). It carries out the reaction dimethylallyl diphosphate + 2 oxidized [2Fe-2S]-[ferredoxin] + H2O = (2E)-4-hydroxy-3-methylbut-2-enyl diphosphate + 2 reduced [2Fe-2S]-[ferredoxin] + 2 H(+). The protein operates within isoprenoid biosynthesis; dimethylallyl diphosphate biosynthesis; dimethylallyl diphosphate from (2E)-4-hydroxy-3-methylbutenyl diphosphate: step 1/1. Its pathway is isoprenoid biosynthesis; isopentenyl diphosphate biosynthesis via DXP pathway; isopentenyl diphosphate from 1-deoxy-D-xylulose 5-phosphate: step 6/6. In terms of biological role, catalyzes the conversion of 1-hydroxy-2-methyl-2-(E)-butenyl 4-diphosphate (HMBPP) into a mixture of isopentenyl diphosphate (IPP) and dimethylallyl diphosphate (DMAPP). Acts in the terminal step of the DOXP/MEP pathway for isoprenoid precursor biosynthesis. The protein is 4-hydroxy-3-methylbut-2-enyl diphosphate reductase of Pseudomonas putida (strain GB-1).